Consider the following 116-residue polypeptide: UPF0127 protein PF1050 (116 aa).

It belongs to the UPF0127 family.

The protein is UPF0127 protein PF1050 of Pyrococcus furiosus (strain ATCC 43587 / DSM 3638 / JCM 8422 / Vc1).